The sequence spans 182 residues: Peptidoglycan-recognition protein SB2 (182 aa).

Positions 1–17 (MKLQLALVLCGLTLALG) are cleaved as a signal peptide. In terms of domain architecture, N-acetylmuramoyl-L-alanine amidase spans 40-165 (PVRLIIIHHT…CQTKATACPG (126 aa)). Residue H47 coordinates Zn(2+). C54 and C60 are joined by a disulfide. N-linked (GlcNAc...) asparagine glycosylation occurs at N149. H155 and C163 together coordinate Zn(2+).

Belongs to the N-acetylmuramoyl-L-alanine amidase 2 family. Zn(2+) is required as a cofactor.

Its subcellular location is the secreted. The enzyme catalyses Hydrolyzes the link between N-acetylmuramoyl residues and L-amino acid residues in certain cell-wall glycopeptides.. In terms of biological role, N-acetylmuramyl-L-alanine amidase involved in innate immunity by degrading bacterial peptidoglycans (PGN). Probably plays a scavenger role by digesting biologically active PGN into biologically inactive fragments. Has no direct bacteriolytic activity. This chain is Peptidoglycan-recognition protein SB2 (PGRP-SB2), found in Drosophila melanogaster (Fruit fly).